Here is a 215-residue protein sequence, read N- to C-terminus: ER lumen protein-retaining receptor B (215 aa).

6 consecutive transmembrane segments (helical) span residues 6-26 (LAGD…IHTI), 55-77 (FVSL…IVWY), 98-118 (WFLV…FTFL), 120-140 (VLWT…LVLL), 149-169 (LTGQ…LNWI), and 178-198 (FVHW…ADFF).

The protein belongs to the ERD2 family.

The protein localises to the golgi apparatus membrane. Its subcellular location is the endoplasmic reticulum membrane. Its function is as follows. Determines the specificity of the luminal endoplasmic reticulum protein retention system. Required for the retro-transport of calreticulin-3 (CRT3) from the Golgi to the ER. Specifically required for elongation factor Tu receptor (EFR) function in response to the pathogen-associated molecular pattern (PAMP) elf18. In Arabidopsis thaliana (Mouse-ear cress), this protein is ER lumen protein-retaining receptor B (ERD2B).